The following is a 258-amino-acid chain: Replication protein A 28 kDa subunit (258 aa).

Low complexity predominate over residues 1–24; sequence MLASQAGSNFSAAASSNGGQQQQQ. The segment at 1-28 is disordered; the sequence is MLASQAGSNFSAAASSNGGQQQQQRRQH. A DNA-binding region (OB) is located at residues 60 to 138; it reads TVVGRVVGYE…SPIVTGTVVS (79 aa).

The protein belongs to the replication factor A protein 2 family. Heterotrimer of 51, 28, and 14 kDa chains. Post-translationally, phosphorylated in a cell-cycle-dependent manner (from the S phase until mitosis). Phosphorylated upon DNA damage, which promotes its translocation to nuclear foci.

The protein resides in the nucleus. It is found in the PML body. As part of the heterotrimeric replication protein A complex (RPA/RP-A), binds and stabilizes single-stranded DNA intermediates, that form during DNA replication or upon DNA stress. It prevents their reannealing and in parallel, recruits and activates different proteins and complexes involved in DNA metabolism. Thereby, it plays an essential role both in DNA replication and the cellular response to DNA damage. The chain is Replication protein A 28 kDa subunit (RPA2) from Crithidia fasciculata.